Reading from the N-terminus, the 352-residue chain is UDP-N-acetylglucosamine--N-acetylmuramyl-(pentapeptide) pyrophosphoryl-undecaprenol N-acetylglucosamine transferase (352 aa).

2 residues coordinate UDP-N-acetyl-alpha-D-glucosamine: S195 and Q287.

It belongs to the glycosyltransferase 28 family. MurG subfamily.

The protein resides in the cell membrane. The enzyme catalyses Mur2Ac(oyl-L-Ala-gamma-D-Glu-L-Lys-D-Ala-D-Ala)-di-trans,octa-cis-undecaprenyl diphosphate + UDP-N-acetyl-alpha-D-glucosamine = beta-D-GlcNAc-(1-&gt;4)-Mur2Ac(oyl-L-Ala-gamma-D-Glu-L-Lys-D-Ala-D-Ala)-di-trans,octa-cis-undecaprenyl diphosphate + UDP + H(+). It functions in the pathway cell wall biogenesis; peptidoglycan biosynthesis. Its function is as follows. Cell wall formation. Catalyzes the transfer of a GlcNAc subunit on undecaprenyl-pyrophosphoryl-MurNAc-pentapeptide (lipid intermediate I) to form undecaprenyl-pyrophosphoryl-MurNAc-(pentapeptide)GlcNAc (lipid intermediate II). This is UDP-N-acetylglucosamine--N-acetylmuramyl-(pentapeptide) pyrophosphoryl-undecaprenol N-acetylglucosamine transferase from Streptococcus pneumoniae (strain Hungary19A-6).